Consider the following 334-residue polypeptide: Glycerol-3-phosphate dehydrogenase [NAD(P)+] (334 aa).

Serine 14, tyrosine 15, histidine 35, and lysine 109 together coordinate NADPH. Sn-glycerol 3-phosphate is bound by residues lysine 109, glycine 138, and threonine 140. Residue alanine 142 coordinates NADPH. The sn-glycerol 3-phosphate site is built by lysine 194, aspartate 247, serine 257, arginine 258, and asparagine 259. Lysine 194 acts as the Proton acceptor in catalysis. An NADPH-binding site is contributed by arginine 258. Residues valine 282 and glutamate 284 each contribute to the NADPH site.

This sequence belongs to the NAD-dependent glycerol-3-phosphate dehydrogenase family.

The protein resides in the cytoplasm. The catalysed reaction is sn-glycerol 3-phosphate + NAD(+) = dihydroxyacetone phosphate + NADH + H(+). The enzyme catalyses sn-glycerol 3-phosphate + NADP(+) = dihydroxyacetone phosphate + NADPH + H(+). It participates in membrane lipid metabolism; glycerophospholipid metabolism. Catalyzes the reduction of the glycolytic intermediate dihydroxyacetone phosphate (DHAP) to sn-glycerol 3-phosphate (G3P), the key precursor for phospholipid synthesis. The protein is Glycerol-3-phosphate dehydrogenase [NAD(P)+] of Aeromonas hydrophila subsp. hydrophila (strain ATCC 7966 / DSM 30187 / BCRC 13018 / CCUG 14551 / JCM 1027 / KCTC 2358 / NCIMB 9240 / NCTC 8049).